A 57-amino-acid chain; its full sequence is GQQPLCNDCFACARSLCICGDLVPQCHEGCQQCEKVDTLSGKPLYQCRSFEDYQCAN.

Disulfide bonds link Cys-6-Cys-55, Cys-12-Cys-17, Cys-26-Cys-33, and Cys-30-Cys-47.

Belongs to the Bowman-Birk serine protease inhibitor family. In terms of tissue distribution, expressed in bulb (at protein level).

Its function is as follows. Serine protease inhibitor. Inhibits trypsin (Ki = 110 nM) and very weakly inhibits chymotrypsin (Ki =1200 nM). Does not inhibit bacterial subtilisin. In Hyacinthus orientalis (Common hyacinth), this protein is Bowman-Birk type proteinase inhibitor B4.